A 61-amino-acid chain; its full sequence is Small ribosomal subunit protein uS14B (61 aa).

Zn(2+) contacts are provided by C24, C27, C40, and C43.

It belongs to the universal ribosomal protein uS14 family. Zinc-binding uS14 subfamily. Part of the 30S ribosomal subunit. Contacts proteins S3 and S10. Requires Zn(2+) as cofactor.

Functionally, binds 16S rRNA, required for the assembly of 30S particles and may also be responsible for determining the conformation of the 16S rRNA at the A site. The polypeptide is Small ribosomal subunit protein uS14B (Rhodococcus jostii (strain RHA1)).